Here is a 276-residue protein sequence, read N- to C-terminus: Diaminopimelate epimerase (276 aa).

Substrate-binding residues include Asn13, Gln46, and Asn66. The Proton donor role is filled by Cys75. Substrate contacts are provided by residues 76–77 (GN), Asn159, Asn192, and 210–211 (ER). Catalysis depends on Cys219, which acts as the Proton acceptor. 220-221 (GS) is a substrate binding site.

The protein belongs to the diaminopimelate epimerase family. As to quaternary structure, homodimer.

The protein localises to the cytoplasm. The enzyme catalyses (2S,6S)-2,6-diaminopimelate = meso-2,6-diaminopimelate. Its pathway is amino-acid biosynthesis; L-lysine biosynthesis via DAP pathway; DL-2,6-diaminopimelate from LL-2,6-diaminopimelate: step 1/1. Catalyzes the stereoinversion of LL-2,6-diaminopimelate (L,L-DAP) to meso-diaminopimelate (meso-DAP), a precursor of L-lysine and an essential component of the bacterial peptidoglycan. The polypeptide is Diaminopimelate epimerase (Vibrio atlanticus (strain LGP32) (Vibrio splendidus (strain Mel32))).